Here is a 490-residue protein sequence, read N- to C-terminus: MDFYQTSLSQLHDDLVNKKISATELTKETFDHIKGNEDQVKAFISLNEDQALKRAAEIDAKGISADQLTAGVPLAVKDNILTKGLTTTAASKMLENFNPVYDATVVEKLNAADYINVGKTNLDEFAMGSSTENSAFFTTHNPWDLTRVPGGSSGGSAAAVAAGDVLGALGTDTGGSIRMPASFNGVVGMKPTYGRVSRWGIIAFGSSFDQVGWLTQNVKDNALLTALISGNDERDMTSSLKEVPDWAAQLNENTNVKGLRIAVPKEYFDGLDEDVQEVIKAALDHLESLGAIVDEVSLPHTKYGVPAYYILASSEASSNLQRYDGIRYGFRAADVKNLEDVYVRSRSEGFGEEVKRRIMLGTFSLSAGFYDAYFNKAAKVRRLIAQDFEDVFKDHDVIVGATGASTAFKIGAEIDDPQTMYMNDVLTVPVNMAGLPAMSIPAGFSAKNGMPVGLQIIGKAFDEQTVYNTGYVFEQTTDFHKKTPKLGGQN.

Catalysis depends on charge relay system residues K77 and S152. S176 acts as the Acyl-ester intermediate in catalysis.

This sequence belongs to the amidase family. GatA subfamily. As to quaternary structure, heterotrimer of A, B and C subunits.

It carries out the reaction L-glutamyl-tRNA(Gln) + L-glutamine + ATP + H2O = L-glutaminyl-tRNA(Gln) + L-glutamate + ADP + phosphate + H(+). Functionally, allows the formation of correctly charged Gln-tRNA(Gln) through the transamidation of misacylated Glu-tRNA(Gln) in organisms which lack glutaminyl-tRNA synthetase. The reaction takes place in the presence of glutamine and ATP through an activated gamma-phospho-Glu-tRNA(Gln). The protein is Glutamyl-tRNA(Gln) amidotransferase subunit A of Limosilactobacillus reuteri (strain DSM 20016) (Lactobacillus reuteri).